We begin with the raw amino-acid sequence, 244 residues long: tRNA (guanine-N(7)-)-methyltransferase (244 aa).

Residues Glu75, Glu100, Asp127, and Asp150 each coordinate S-adenosyl-L-methionine. Residue Asp150 is part of the active site. Residues Lys154, Asp186, and 223-226 (TRFE) each bind substrate.

The protein belongs to the class I-like SAM-binding methyltransferase superfamily. TrmB family.

The enzyme catalyses guanosine(46) in tRNA + S-adenosyl-L-methionine = N(7)-methylguanosine(46) in tRNA + S-adenosyl-L-homocysteine. It participates in tRNA modification; N(7)-methylguanine-tRNA biosynthesis. In terms of biological role, catalyzes the formation of N(7)-methylguanine at position 46 (m7G46) in tRNA. This Xylella fastidiosa (strain M23) protein is tRNA (guanine-N(7)-)-methyltransferase.